The sequence spans 177 residues: Adenine phosphoribosyltransferase (177 aa).

This sequence belongs to the purine/pyrimidine phosphoribosyltransferase family. In terms of assembly, homodimer.

It localises to the cytoplasm. The enzyme catalyses AMP + diphosphate = 5-phospho-alpha-D-ribose 1-diphosphate + adenine. The protein operates within purine metabolism; AMP biosynthesis via salvage pathway; AMP from adenine: step 1/1. Functionally, catalyzes a salvage reaction resulting in the formation of AMP, that is energically less costly than de novo synthesis. The protein is Adenine phosphoribosyltransferase of Leptospira interrogans serogroup Icterohaemorrhagiae serovar copenhageni (strain Fiocruz L1-130).